The primary structure comprises 279 residues: Eukaryotic translation initiation factor 3 subunit G (279 aa).

Disordered stretches follow at residues 1 to 26 (MSTG…IANP), 66 to 115 (RKNW…KAHE), and 152 to 171 (TPSG…AAGA). Position 78 is a phosphoserine (Ser78). Basic and acidic residues predominate over residues 102-115 (KQDEKKEEEDKAHE). The span at 152 to 163 (TPSGTTPEPTSE) shows a compositional bias: low complexity. The RRM domain occupies 197 to 276 (TTLKVSQLNS…LILHLEWSKK (80 aa)).

Belongs to the eIF-3 subunit G family. Component of the eukaryotic translation initiation factor 3 (eIF-3) complex.

It is found in the cytoplasm. RNA-binding component of the eukaryotic translation initiation factor 3 (eIF-3) complex, which is involved in protein synthesis of a specialized repertoire of mRNAs and, together with other initiation factors, stimulates binding of mRNA and methionyl-tRNAi to the 40S ribosome. The eIF-3 complex specifically targets and initiates translation of a subset of mRNAs involved in cell proliferation. This subunit can bind 18S rRNA. The protein is Eukaryotic translation initiation factor 3 subunit G of Candida albicans (strain SC5314 / ATCC MYA-2876) (Yeast).